The following is a 652-amino-acid chain: Leucine aminopeptidase 2 (652 aa).

A peptide contacts are provided by residues 165–167 and 293–298; these read QLE and PYGGME. Residue H322 coordinates Zn(2+). Residue E323 is the Proton acceptor of the active site. Residues H326 and E345 each contribute to the Zn(2+) site. Y411 functions as the Proton donor in the catalytic mechanism.

Belongs to the peptidase M1 family. Zn(2+) serves as cofactor.

It localises to the cytoplasm. Its subcellular location is the nucleus. The catalysed reaction is an epoxide + H2O = an ethanediol. Its function is as follows. Aminopeptidase that preferentially cleaves di- and tripeptides. Also has low epoxide hydrolase activity (in vitro). Can hydrolyze the epoxide leukotriene LTA(4) but it forms preferentially 5,6-dihydroxy-7,9,11,14-eicosatetraenoic acid rather than the cytokine leukotriene B(4) as the product compared to the homologous mammalian enzyme (in vitro). This Candida glabrata (strain ATCC 2001 / BCRC 20586 / JCM 3761 / NBRC 0622 / NRRL Y-65 / CBS 138) (Yeast) protein is Leucine aminopeptidase 2.